An 85-amino-acid polypeptide reads, in one-letter code: Antitoxin VapB31 (85 aa).

In terms of biological role, antitoxin component of a type II toxin-antitoxin (TA) system. Upon expression in M.smegmatis neutralizes the effect of cognate toxin VapC31. In Mycobacterium tuberculosis (strain ATCC 25618 / H37Rv), this protein is Antitoxin VapB31 (vapB31).